A 447-amino-acid polypeptide reads, in one-letter code: N-succinylarginine dihydrolase (447 aa).

Substrate is bound by residues 19-28 (AGLSFGNEAS), N110, and 137-138 (HR). Residue E174 is part of the active site. R212 is a binding site for substrate. Residue H248 is part of the active site. Substrate is bound by residues D250 and N359. C365 serves as the catalytic Nucleophile.

This sequence belongs to the succinylarginine dihydrolase family. Homodimer.

The enzyme catalyses N(2)-succinyl-L-arginine + 2 H2O + 2 H(+) = N(2)-succinyl-L-ornithine + 2 NH4(+) + CO2. It functions in the pathway amino-acid degradation; L-arginine degradation via AST pathway; L-glutamate and succinate from L-arginine: step 2/5. In terms of biological role, catalyzes the hydrolysis of N(2)-succinylarginine into N(2)-succinylornithine, ammonia and CO(2). In Salmonella paratyphi A (strain ATCC 9150 / SARB42), this protein is N-succinylarginine dihydrolase.